The sequence spans 2392 residues: MKQKLLENKFSYRKFKLEEIKKYEYLLNSCINWNLIKLVTGIPSNREHLIKLFDLRILSSLILRDLRKSEMKKSLILKSFPLLILSMFIHRMNSRNIVEINNCHLERIIYGGINYREGRDEISRRYLHSFMKNFSIPLNYPFSTKKGRERYTNNLLRQKKHIWVFKRNLLGKKYIKPVYDKIDFYNFEEWKTLIIKEILPSWKISNQSIDKANILLEDKNIEDLKHFFELYVDDIIRRDYHWKNSLDIISYRDRKNQVNFNLKNNLEFLDKKLFYCLISAFCEKVLSEVEGPFKHKRIKSTFNLKNIEDFSDFEVTNKEIFKWELHWWKKKIFQFLDKNHESDQSIAKSFTFFQNKRFLFLENYAEFYTWLLYEDSPFHLKKNKQLLDTAKDTFKEDSFQLNDRRNQIYSFENKGIFLNILHNFSIYVSNKVRKLNHLKIFSDISIKNSYLINKNLVYHGKGSGGTIYEDEKQKTWDTTDFYLKREKYFISKTDFLSRSIEKKCFKSNKYFLDLFLNRGDTNKRSTTESNIHSYDLSSLTKAKRKEVKSGSSYEFLEKDSFFFLMKENFVKDFKSITKDFFSNREKKMTDYFPKLINYAFLDISSIDESNMSFHITGRHLKDFPLNEWRTNIPSRNYMLSDISRMINLSKIRKKFQNVFFVSSISSKRIRQNKNSNDFYLISLIKLNLSWNRPYLCWSTLYKCNKQYIFNRYLKLKERFMRGVEQLNLLITKPNQNYDKILYFQVESEIGKFHKSKENELNYNFFFPLLNGINEDDKFLNEMFHKKVEAHSEENFETYIYPTNHRKKLKLWYELNKGSYICLDNVVKKYYSIYKLKFYLINRMKKLWVERIENGNSSNFIRNIVNGHSSNWKINGREWSDYNIKRDKYINWNSYIYKWFDRTKNLQIFPNWFSDNTSRRWFNEIRFIKPDIFMTYPKKLEKNYYSKVYFIFNTSSNSLLESISKKKNINLRGRVLHNYKKLSRDSEKLIKNKLLPESFLNKNLIKNIIISLFNNEKNHDIFREFPRKTFSLWIYKNRNNGFNSINNFQKNLMMNFHNTNTIEFLDYLHDFHFRYDKRLPFFMKEIHIKNYDSTYNKFLRILPIYSNLRSLSINKIKPFFFQSRIDITLSIQLQVFNDSLSNYLGRTCNYIFTSFTNHLYKLLNLLIKINSSIYKETDSCSIQKFLAMTPSGPTILNLKITHYDEFFLGELTSNFNGYFEFSSEPNLSHTEIQSYKNELLSEFLIEFRNKNNRKLQWIKESFLKLNLKENFKYVIGGESIDRISINLDFYEKNKNILPYPSLSITDFFDKDDKIKVSKKLYFLEKWNFFQNYTSWFFTFEWWRYFSNIPLETFPEVLLNITDQSKYISYKTTQYIEEILKDLWKNLNFIFQTNILRKININSEIRLLKQINNEQHESIFIYIWSHFQFINLSNAIYLTLISLSVSCFLVSENYFSTLIGLDYIDSWRRFKVIEYLRDPLRGSYLVERWIYGNQTQIIRTENFFMLLLKNFIHYIKNGRFFLFTRKKLDTWLFHSRTLDLSRRKKDLLVKSVITERSLSQYRLNLNLNHNLRNYDFGYKISEKPGFYYLRYLAETYQKDLVNHSFYSSHLAEKWILLAFWKGMISSQKLWQTKILNHESYRIPIPFELDLFSSKGILLVGPTEIGKSYLIKNLAADSYVPLIKISISKLLYNKPDVITESWINILMESLQRLTLILELAKKMSPCIIWIQDIHELNVNRSTENVESDPTFLLGILLKYFHTEFISKSTKGIIIIGSTHLPRKVDPALISPNRLDKLMNIRIIDIFERQEKFSILLHSKRFYFKNKLLHFNEFAYRTMGYNGRDLVALANEVSLINTTQGNSTIYIDAVRLALHRQTLGFTYINNQMLFCQNEGVLLHKIGKAVIQNIFIKIFPMNPLYIGSDLWKKKFYYLSEWFLEPSVTEPTIKELTLLSYILGCLAGLAAGDSWSILEHEPENLIPLNKFIENDFDLACGISESFLVEFSWLEIFQDESINNEIEFFPKIGARHFLNMMQRGISSTTSGKFMYKQDGLRNRSIFKKTVQYKEKLYELASETTWAPKIWRLSFIRTKSFDWIGRPNDFESLYSFWFLREKEQTFSVSENSREIFHSSQVAQYKTKEELPYERILSRIRRRNVEELESQLGFILSEDQFKILGFPELSTQYRIEYELFQKPMLFMGGRFIWDPTSLSFETRYSVFSRRELFIDEEMRRRLYVTYGARRERERSRSSQKIKQFFLRCGYGRDFMNNSSIGWWNGLFLTEKYNIEIFKRIEEISVQLKHPEVFTPVYLYQSWLIENSREKLSRFDLLNHRERWIKLNNKSFHYFSIHSTLLESYNYLLNFFISNRILLDEMTKMLLKDGWLFQNEIEHFICKMKK.

1658–1665 contacts ATP; it reads GPTEIGKS.

Belongs to the Ycf2 family.

The protein localises to the plastid. It localises to the chloroplast stroma. Its function is as follows. Probable ATPase of unknown function. Its presence in a non-photosynthetic plant (Epifagus virginiana) and experiments in tobacco indicate that it has an essential function which is probably not related to photosynthesis. The protein is Protein Ycf2 of Anthoceros angustus (Hornwort).